The primary structure comprises 189 residues: Elongation factor P (189 aa).

At Lys34 the chain carries N6-(3,6-diaminohexanoyl)-5-hydroxylysine.

This sequence belongs to the elongation factor P family. Post-translationally, may be beta-lysylated on the epsilon-amino group of Lys-34 by the combined action of EpmA and EpmB, and then hydroxylated on the C5 position of the same residue by EpmC (if this protein is present). Lysylation is critical for the stimulatory effect of EF-P on peptide-bond formation. The lysylation moiety may extend toward the peptidyltransferase center and stabilize the terminal 3-CCA end of the tRNA. Hydroxylation of the C5 position on Lys-34 may allow additional potential stabilizing hydrogen-bond interactions with the P-tRNA.

The protein resides in the cytoplasm. The protein operates within protein biosynthesis; polypeptide chain elongation. Functionally, involved in peptide bond synthesis. Alleviates ribosome stalling that occurs when 3 or more consecutive Pro residues or the sequence PPG is present in a protein, possibly by augmenting the peptidyl transferase activity of the ribosome. Modification of Lys-34 is required for alleviation. This chain is Elongation factor P, found in Alcanivorax borkumensis (strain ATCC 700651 / DSM 11573 / NCIMB 13689 / SK2).